The sequence spans 396 residues: ATP phosphoribosyltransferase regulatory subunit (396 aa).

This sequence belongs to the class-II aminoacyl-tRNA synthetase family. HisZ subfamily. As to quaternary structure, heteromultimer composed of HisG and HisZ subunits.

The protein localises to the cytoplasm. Its pathway is amino-acid biosynthesis; L-histidine biosynthesis; L-histidine from 5-phospho-alpha-D-ribose 1-diphosphate: step 1/9. In terms of biological role, required for the first step of histidine biosynthesis. May allow the feedback regulation of ATP phosphoribosyltransferase activity by histidine. The chain is ATP phosphoribosyltransferase regulatory subunit from Cellvibrio japonicus (strain Ueda107) (Pseudomonas fluorescens subsp. cellulosa).